We begin with the raw amino-acid sequence, 472 residues long: Citrate synthase, mitochondrial (472 aa).

Active-site residues include histidine 308, histidine 354, and aspartate 409.

Belongs to the citrate synthase family. In terms of assembly, homodimer.

The protein resides in the mitochondrion matrix. The enzyme catalyses oxaloacetate + acetyl-CoA + H2O = citrate + CoA + H(+). It functions in the pathway carbohydrate metabolism; tricarboxylic acid cycle; isocitrate from oxaloacetate: step 1/2. The chain is Citrate synthase, mitochondrial (CS) from Daucus carota (Wild carrot).